A 201-amino-acid polypeptide reads, in one-letter code: Large ribosomal subunit protein bL25 (201 aa).

This sequence belongs to the bacterial ribosomal protein bL25 family. CTC subfamily. As to quaternary structure, part of the 50S ribosomal subunit; part of the 5S rRNA/L5/L18/L25 subcomplex. Contacts the 5S rRNA. Binds to the 5S rRNA independently of L5 and L18.

In terms of biological role, this is one of the proteins that binds to the 5S RNA in the ribosome where it forms part of the central protuberance. The protein is Large ribosomal subunit protein bL25 of Burkholderia cenocepacia (strain HI2424).